A 2448-amino-acid polypeptide reads, in one-letter code: Non-reducing polyketide synthase mapC (2448 aa).

An N-terminal acylcarrier protein transacylase domain (SAT) region spans residues 14-226 (VLFGPQCPDI…HHEAHREGIQ (213 aa)). The interval 330–350 (GFSNESPQPSTASLSNSVQTF) is disordered. The Ketosynthase family 3 (KS3) domain occupies 359-775 (ASPIAITGMA…GSNAALIVKE (417 aa)). Residues Cys-524, His-659, and His-698 each act as for beta-ketoacyl synthase activity in the active site. The tract at residues 885-1188 (LCFGGQNGLT…HKIDLGGSSG (304 aa)) is malonyl-CoA:ACP transacylase (MAT) domain. Residue Ser-972 is the For acyl/malonyl transferase activity of the active site. The interval 1256–1388 (GQEAGLLCQL…GTVCLHQERS (133 aa)) is N-terminal hotdog fold. Positions 1256–1565 (GQEAGLLCQL…FTSVSIRSLT (310 aa)) constitute a PKS/mFAS DH domain. Positions 1261–1564 (LLCQLSESPD…RFTSVSIRSL (304 aa)) are product template (PT) domain. His-1290 functions as the Proton acceptor; for dehydratase activity in the catalytic mechanism. Residues 1414–1565 (ASNGLKGSTV…FTSVSIRSLT (152 aa)) are C-terminal hotdog fold. The Proton donor; for dehydratase activity role is filled by Asp-1471. One can recognise a Carrier domain in the interval 1610–1684 (AKDLATVQEM…GLVEHIFPGH (75 aa)). O-(pantetheine 4'-phosphoryl)serine is present on Ser-1644. The interval 1841–2076 (PYALEHDLLQ…GFEWVDWTNN (236 aa)) is methyltransferase (CMeT) domain. Residues Ser-2227, Asp-2385, and His-2417 each act as for thioesterase activity in the active site.

It is found in the cytoplasm. The protein resides in the cytosol. It carries out the reaction 3 malonyl-CoA + acetyl-CoA + S-adenosyl-L-methionine + H(+) = 5-methylorsellinate + S-adenosyl-L-homocysteine + 3 CO2 + 4 CoA. It functions in the pathway secondary metabolite biosynthesis; terpenoid biosynthesis. Non-reducing polyketide synthase; part of the gene cluster that mediates the biosynthesis of mycophenolic acid (MPA), the first isolated antibiotic natural product in the world obtained from a culture of Penicillium brevicompactum in 1893. MpaC catalyzes the synthesis of 5-methylorsellinic acid (5MOA) via the condensation of 1 acetyl-CoA starter unit with 3 malonyl-CoA units and one methylation step. The first step of the pathway is the synthesis of 5-methylorsellinic acid (5MOA) by the cytosolic polyketide synthase mpaC. 5MOA is then converted to the phthalide compound 5,7-dihydroxy-4,6-dimethylphthalide (DHMP) by the endoplasmic reticulum-bound cytochrome P450 monooxygenase mpaDE. MpaDE first catalyzes hydroxylation of 5-MOA to 4,6-dihydroxy-2-(hydroxymethyl)-3-methylbenzoic acid (DHMB). MpaDE then acts as a lactone synthase that catalyzes the ring closure to convert DHMB into DHMP. The next step is the prenylation of DHMP by the Golgi apparatus-associated prenyltransferase mpaA to yield farnesyl-DHMP (FDHMP). The ER-bound oxygenase mpaB then mediates the oxidative cleavage the C19-C20 double bond in FDHMP to yield FDHMP-3C via a mycophenolic aldehyde intermediate. The O-methyltransferase mpaG catalyzes the methylation of FDHMP-3C to yield MFDHMP-3C. After the cytosolic methylation of FDHMP-3C, MFDHMP-3C enters into peroxisomes probably via free diffusion due to its low molecular weight. Upon a peroxisomal CoA ligation reaction, catalyzed by a beta-oxidation component enzyme acyl-CoA ligase ACL891, MFDHMP-3C-CoA would then be restricted to peroxisomes for the following beta-oxidation pathway steps. The peroxisomal beta-oxidation machinery than converts MFDHMP-3C-CoA into MPA_CoA, via a beta-oxidation chain-shortening process. Finally mpaH acts as a peroxisomal acyl-CoA hydrolase with high substrate specificity toward MPA-CoA to release the final product MPA. The chain is Non-reducing polyketide synthase mapC from Penicillium brevicompactum.